The following is a 143-amino-acid chain: Endoribonuclease YbeY (143 aa).

Positions 106, 110, and 116 each coordinate Zn(2+).

Belongs to the endoribonuclease YbeY family. Zn(2+) is required as a cofactor.

It localises to the cytoplasm. Functionally, single strand-specific metallo-endoribonuclease involved in late-stage 70S ribosome quality control and in maturation of the 3' terminus of the 16S rRNA. In Petrotoga mobilis (strain DSM 10674 / SJ95), this protein is Endoribonuclease YbeY.